The chain runs to 893 residues: Flippase kinase 1 (893 aa).

A compositionally biased stretch (basic and acidic residues) spans 1–23; sequence MAGHHHEHEQERDHEQEHEHDSL. Disordered regions lie at residues 1-124, 129-148, and 163-243; these read MAGH…SSKL, PMTSVANASPASPPLSPTIP, and QHEH…ERAG. Residues 24-42 are compositionally biased toward polar residues; it reads QRPTTGSERTRSISFSKLL. The span at 49–62 shows a compositional bias: low complexity; that stretch reads NASSSNNMSVSSVN. A compositionally biased stretch (polar residues) spans 76-87; the sequence is NNSGSEGQSSRF. Residues 96–122 are compositionally biased toward low complexity; sequence SGNSSKNASAHNSSQSSLEGDSASSSS. 5 positions are modified to phosphoserine: Ser-140, Ser-144, Ser-171, Ser-175, and Ser-185. The span at 206-216 shows a compositional bias: low complexity; sequence SQNSNNSSSTS. Over residues 228 to 237 the composition is skewed to polar residues; the sequence is GSQGFSSNNP. Residue Ser-300 is modified to Phosphoserine. The segment covering 334 to 355 has biased composition (polar residues); sequence DTLNGSPSRGSSKSPTITQTFP. The segment at 334 to 480 is disordered; the sequence is DTLNGSPSRG…PRRSRRLRTK (147 aa). Over residues 370-380 the composition is skewed to basic and acidic residues; the sequence is NNDKHDEKEEQ. Over residues 381-399 the composition is skewed to polar residues; sequence QTTTDNKTRNLSPTKQNGK. Phosphoserine is present on Ser-414. The span at 422–439 shows a compositional bias: low complexity; that stretch reads ASATSPTSSSARKTSGSS. Position 462 is a phosphoserine (Ser-462). The 282-residue stretch at 496–777 folds into the Protein kinase domain; that stretch reads FEKIRLLGQG…AADVKKHPFF (282 aa). ATP-binding positions include 502 to 510 and Lys-525; that span reads LGQGDVGKV. The active-site Proton acceptor is Asp-621. An AGC-kinase C-terminal domain is found at 778 to 861; that stretch reads KKVQWSLLRN…MSLMEQDNNS (84 aa). The interval 874-893 is disordered; it reads AYTPNSNRSRSNSHRTFFKR. Basic residues predominate over residues 884 to 893; sequence SNSHRTFFKR.

It belongs to the protein kinase superfamily. Ser/Thr protein kinase family. KIN82 subfamily. Post-translationally, the N-terminal non-catalytic domain is phosphorylated by YPK1.

Its subcellular location is the cytoplasm. It is found in the cell membrane. The enzyme catalyses L-seryl-[protein] + ATP = O-phospho-L-seryl-[protein] + ADP + H(+). It carries out the reaction L-threonyl-[protein] + ATP = O-phospho-L-threonyl-[protein] + ADP + H(+). With respect to regulation, down-regulated by YKP1 phosphorylation. This effect is counteracted in the presence of mannosyl-inositolphosphorylceramide (MIPC). Its function is as follows. Flippase activator that phosphorylates DNF1 and DNF2 and which is involved in the generation of phospholipid asymmetry in membranes by the inward translocation of phospholipids and in the retrieval pathway from early endosomes to the trans-Golgi network (TGN). Also phosphorylates the N-terminal half of YPK1. Involved in pheromone-response. The protein is Flippase kinase 1 (FPK1) of Saccharomyces cerevisiae (strain ATCC 204508 / S288c) (Baker's yeast).